The primary structure comprises 422 residues: GTPase Obg (422 aa).

In terms of domain architecture, Obg spans 1-156 (MKFIDEVNVL…FALRLVLKVL (156 aa)). One can recognise an OBG-type G domain in the interval 157–324 (ADVGLVGKPS…LKAAIFKMLE (168 aa)). Residues 163–170 (GKPSAGKS), 188–192 (FTTLV), 209–212 (DLPG), 278–281 (NKSD), and 305–307 (SAL) contribute to the GTP site. 2 residues coordinate Mg(2+): Ser170 and Thr190. The region spanning 342-420 (NITLDRDALK…IGNFEFDWSD (79 aa)) is the OCT domain.

The protein belongs to the TRAFAC class OBG-HflX-like GTPase superfamily. OBG GTPase family. Monomer. Requires Mg(2+) as cofactor.

Its subcellular location is the cytoplasm. Functionally, an essential GTPase which binds GTP, GDP and possibly (p)ppGpp with moderate affinity, with high nucleotide exchange rates and a fairly low GTP hydrolysis rate. Plays a role in control of the cell cycle, stress response, ribosome biogenesis and in those bacteria that undergo differentiation, in morphogenesis control. In Metamycoplasma arthritidis (strain 158L3-1) (Mycoplasma arthritidis), this protein is GTPase Obg.